Here is a 394-residue protein sequence, read N- to C-terminus: Elongation factor Tu (394 aa).

In terms of domain architecture, tr-type G spans 10-204 (KPHVNVGTIG…AVDEWIPTPE (195 aa)). The segment at 19–26 (GHIDHGKT) is G1. 19 to 26 (GHIDHGKT) contributes to the GTP binding site. Thr-26 contributes to the Mg(2+) binding site. The interval 60 to 64 (GITIN) is G2. Residues 81–84 (DCPG) form a G3 region. GTP-binding positions include 81-85 (DCPGH) and 136-139 (NKCD). The segment at 136–139 (NKCD) is G4. Residues 174–176 (SAL) are G5.

The protein belongs to the TRAFAC class translation factor GTPase superfamily. Classic translation factor GTPase family. EF-Tu/EF-1A subfamily. As to quaternary structure, monomer.

Its subcellular location is the cytoplasm. The catalysed reaction is GTP + H2O = GDP + phosphate + H(+). Functionally, GTP hydrolase that promotes the GTP-dependent binding of aminoacyl-tRNA to the A-site of ribosomes during protein biosynthesis. In Mycoplasma pneumoniae (strain ATCC 29342 / M129 / Subtype 1) (Mycoplasmoides pneumoniae), this protein is Elongation factor Tu.